Consider the following 596-residue polypeptide: Uptake hydrogenase large subunit (596 aa).

Ni(2+)-binding residues include C75, C78, C575, and C578.

This sequence belongs to the [NiFe]/[NiFeSe] hydrogenase large subunit family. Heterodimer of a large and a small subunit. The cofactor is Ni(2+).

It is found in the cell membrane. It carries out the reaction H2 + A = AH2. In terms of biological role, this enzyme recycles the H(2) produced by nitrogenase to increase the production of ATP and to protect nitrogenase against inhibition or damage by O(2) under carbon- or phosphate-limited conditions. The polypeptide is Uptake hydrogenase large subunit (hupB) (Bradyrhizobium diazoefficiens (strain JCM 10833 / BCRC 13528 / IAM 13628 / NBRC 14792 / USDA 110)).